We begin with the raw amino-acid sequence, 402 residues long: Major outer membrane porin (402 aa).

A signal peptide spans 1 to 22 (MKKLLKSALLFAATGSALSLQA).

It belongs to the chlamydial porin (CP) (TC 1.B.2) family. As to quaternary structure, part of a disulfide cross-linked outer membrane complex (COMC) composed of the major outer membrane porin, the small cysteine-rich protein (OmcA) and the large cysteine-rich periplasmic protein (OmcB).

The protein resides in the cell outer membrane. In terms of biological role, in elementary bodies (EBs, the infectious stage, which is able to survive outside the host cell) provides the structural integrity of the outer envelope through disulfide cross-links with the small cysteine-rich protein and the large cysteine-rich periplasmic protein. It has been described in publications as the Sarkosyl-insoluble COMC (Chlamydia outer membrane complex), and serves as the functional equivalent of peptidoglycan. Its function is as follows. Permits diffusion of specific solutes through the outer membrane. This chain is Major outer membrane porin (ompA), found in Chlamydia psittaci (Chlamydophila psittaci).